The following is a 233-amino-acid chain: Large ribosomal subunit protein uL1 (233 aa).

Belongs to the universal ribosomal protein uL1 family. As to quaternary structure, part of the 50S ribosomal subunit.

Its function is as follows. Binds directly to 23S rRNA. The L1 stalk is quite mobile in the ribosome, and is involved in E site tRNA release. Functionally, protein L1 is also a translational repressor protein, it controls the translation of the L11 operon by binding to its mRNA. The sequence is that of Large ribosomal subunit protein uL1 from Vibrio cholerae serotype O1 (strain ATCC 39315 / El Tor Inaba N16961).